Here is a 1228-residue protein sequence, read N- to C-terminus: DNA-directed RNA polymerase subunit beta (1228 aa).

The segment at 1175–1204 is disordered; the sequence is ESVDEDEQPQGLGAFEIGGDEIEEDKEDDK. The segment covering 1192 to 1202 has biased composition (acidic residues); it reads GGDEIEEDKED.

It belongs to the RNA polymerase beta chain family. In terms of assembly, the RNAP catalytic core consists of 2 alpha, 1 beta, 1 beta' and 1 omega subunit. When a sigma factor is associated with the core the holoenzyme is formed, which can initiate transcription.

It carries out the reaction RNA(n) + a ribonucleoside 5'-triphosphate = RNA(n+1) + diphosphate. DNA-dependent RNA polymerase catalyzes the transcription of DNA into RNA using the four ribonucleoside triphosphates as substrates. The polypeptide is DNA-directed RNA polymerase subunit beta (Caldicellulosiruptor bescii (strain ATCC BAA-1888 / DSM 6725 / KCTC 15123 / Z-1320) (Anaerocellum thermophilum)).